The following is a 280-amino-acid chain: Small ribosomal subunit protein uS2 (280 aa).

It belongs to the universal ribosomal protein uS2 family.

The polypeptide is Small ribosomal subunit protein uS2 (Desulforapulum autotrophicum (strain ATCC 43914 / DSM 3382 / VKM B-1955 / HRM2) (Desulfobacterium autotrophicum)).